Reading from the N-terminus, the 115-residue chain is NADH-ubiquinone oxidoreductase chain 3 (115 aa).

The next 3 membrane-spanning stretches (helical) occupy residues 3 to 23 (VMLTLMTNVTLASLLVLIAFW), 55 to 75 (FFLVAITFLLFDLEIALLLPL), and 84 to 104 (LTTMLIMALLLISLLAASLAY).

The protein belongs to the complex I subunit 3 family. Core subunit of respiratory chain NADH dehydrogenase (Complex I) which is composed of 45 different subunits. Interacts with TMEM186. Interacts with TMEM242.

The protein localises to the mitochondrion inner membrane. The enzyme catalyses a ubiquinone + NADH + 5 H(+)(in) = a ubiquinol + NAD(+) + 4 H(+)(out). Its function is as follows. Core subunit of the mitochondrial membrane respiratory chain NADH dehydrogenase (Complex I) which catalyzes electron transfer from NADH through the respiratory chain, using ubiquinone as an electron acceptor. Essential for the catalytic activity of complex I. This is NADH-ubiquinone oxidoreductase chain 3 from Canis lupus familiaris (Dog).